Reading from the N-terminus, the 518-residue chain is FAD-dependent monooxygenase tpcD (518 aa).

The N-terminal stretch at 1 to 22 (MQLLGTLSWLYAIQASIGSSKA) is a signal peptide. Residue N61 is glycosylated (N-linked (GlcNAc...) asparagine). In terms of domain architecture, FAD-binding PCMH-type spans 75-246 (QSAQPACLVH…TRFDLDVFQQ (172 aa)). Residue H112 is modified to Pros-8alpha-FAD histidine. N163, N208, N216, and N346 each carry an N-linked (GlcNAc...) asparagine glycan.

The protein belongs to the oxygen-dependent FAD-linked oxidoreductase family. It depends on FAD as a cofactor.

It functions in the pathway secondary metabolite biosynthesis; terpenoid biosynthesis. FAD-dependent monooxygenase; part of the gene cluster that mediates the biosynthesis of terpestacin. The bifunctional terpene synthase tpcA converts isopentenyl diphosphate (IPP) and dimethylallyl diphosphate (DMAPP) into the sesterterpene preterpestacin I. The C-terminal prenyltransferase (PT) domain of tpcA catalyzes formation of GFPP, whereas the N-terminal terpene cyclase (TC) domain catalyzes the cyclization of GFPP into preterpestacin I. The cytochrome P450 monooxygenase tpcB then hydroxylates preterpestacin I to yield 24-hydroxypreterpstacin I (renamed as preterpestacin II) whereas the cytochrome P450 monooxygenase tpcC further hydroxylates preterpestacin II to yield 16,17-dihydroxypreterpestacin II (renamed as preterpestacin III). Finally, the FAD-dependent monooxygenase tpcD converts preterpestacin III into terpestacin. The chain is FAD-dependent monooxygenase tpcD from Cochliobolus heterostrophus (strain C5 / ATCC 48332 / race O) (Southern corn leaf blight fungus).